The chain runs to 158 residues: Class 10 plant pathogenesis-related protein 2A (158 aa).

Asp8 is a trans-zeatin binding site. The Ca(2+) site is built by Pro32, Val35, and Ile38. Residues Glu60, His69, Tyr81, and Tyr83 each coordinate trans-zeatin.

Belongs to the BetVI family.

The protein resides in the cytoplasm. It localises to the cytosol. Functionally, class II ribonuclease (RNase). Binds to cytokinins. Interacts with melatonin. The protein is Class 10 plant pathogenesis-related protein 2A of Lupinus luteus (European yellow lupine).